We begin with the raw amino-acid sequence, 188 residues long: Large ribosomal subunit protein uL22 (188 aa).

Positions 155-188 are disordered; that stretch reads STPEGAKKGKKKKGTKDAVEKSSKRVKTAATAAH.

This sequence belongs to the universal ribosomal protein uL22 family.

This Agriotes lineatus (Lined click beetle) protein is Large ribosomal subunit protein uL22 (RpL17).